The chain runs to 561 residues: DNA ligase B (561 aa).

The active-site N6-AMP-lysine intermediate is the K128.

The protein belongs to the NAD-dependent DNA ligase family. LigB subfamily.

It carries out the reaction NAD(+) + (deoxyribonucleotide)n-3'-hydroxyl + 5'-phospho-(deoxyribonucleotide)m = (deoxyribonucleotide)n+m + AMP + beta-nicotinamide D-nucleotide.. Catalyzes the formation of phosphodiester linkages between 5'-phosphoryl and 3'-hydroxyl groups in double-stranded DNA using NAD as a coenzyme and as the energy source for the reaction. This chain is DNA ligase B, found in Pseudomonas syringae pv. syringae (strain B728a).